The primary structure comprises 930 residues: Protein translocase subunit SecA (930 aa).

Residues Gln-87, 105–109 (GEGKT), and Asp-515 contribute to the ATP site. Zn(2+) contacts are provided by Cys-914, Cys-916, Cys-925, and His-926.

This sequence belongs to the SecA family. Monomer and homodimer. Part of the essential Sec protein translocation apparatus which comprises SecA, SecYEG and auxiliary proteins SecDF-YajC and YidC. It depends on Zn(2+) as a cofactor.

Its subcellular location is the cell inner membrane. The protein resides in the cytoplasm. It catalyses the reaction ATP + H2O + cellular proteinSide 1 = ADP + phosphate + cellular proteinSide 2.. Its function is as follows. Part of the Sec protein translocase complex. Interacts with the SecYEG preprotein conducting channel. Has a central role in coupling the hydrolysis of ATP to the transfer of proteins into and across the cell membrane, serving both as a receptor for the preprotein-SecB complex and as an ATP-driven molecular motor driving the stepwise translocation of polypeptide chains across the membrane. In Cupriavidus metallidurans (strain ATCC 43123 / DSM 2839 / NBRC 102507 / CH34) (Ralstonia metallidurans), this protein is Protein translocase subunit SecA.